We begin with the raw amino-acid sequence, 253 residues long: Tryptophan synthase alpha chain (253 aa).

Catalysis depends on proton acceptor residues Glu45 and Asp56.

This sequence belongs to the TrpA family. In terms of assembly, tetramer of two alpha and two beta chains.

It carries out the reaction (1S,2R)-1-C-(indol-3-yl)glycerol 3-phosphate + L-serine = D-glyceraldehyde 3-phosphate + L-tryptophan + H2O. The protein operates within amino-acid biosynthesis; L-tryptophan biosynthesis; L-tryptophan from chorismate: step 5/5. The alpha subunit is responsible for the aldol cleavage of indoleglycerol phosphate to indole and glyceraldehyde 3-phosphate. The chain is Tryptophan synthase alpha chain from Flavobacterium johnsoniae (strain ATCC 17061 / DSM 2064 / JCM 8514 / BCRC 14874 / CCUG 350202 / NBRC 14942 / NCIMB 11054 / UW101) (Cytophaga johnsonae).